Here is a 119-residue protein sequence, read N- to C-terminus: Ribonuclease P protein component (119 aa).

It belongs to the RnpA family. Consists of a catalytic RNA component (M1 or rnpB) and a protein subunit.

It catalyses the reaction Endonucleolytic cleavage of RNA, removing 5'-extranucleotides from tRNA precursor.. In terms of biological role, RNaseP catalyzes the removal of the 5'-leader sequence from pre-tRNA to produce the mature 5'-terminus. It can also cleave other RNA substrates such as 4.5S RNA. The protein component plays an auxiliary but essential role in vivo by binding to the 5'-leader sequence and broadening the substrate specificity of the ribozyme. The chain is Ribonuclease P protein component from Serratia proteamaculans (strain 568).